Reading from the N-terminus, the 72-residue chain is Translation initiation factor IF-1 (72 aa).

The S1-like domain occupies methionine 1 to lysine 72.

Belongs to the IF-1 family. As to quaternary structure, component of the 30S ribosomal translation pre-initiation complex which assembles on the 30S ribosome in the order IF-2 and IF-3, IF-1 and N-formylmethionyl-tRNA(fMet); mRNA recruitment can occur at any time during PIC assembly.

It is found in the cytoplasm. In terms of biological role, one of the essential components for the initiation of protein synthesis. Stabilizes the binding of IF-2 and IF-3 on the 30S subunit to which N-formylmethionyl-tRNA(fMet) subsequently binds. Helps modulate mRNA selection, yielding the 30S pre-initiation complex (PIC). Upon addition of the 50S ribosomal subunit IF-1, IF-2 and IF-3 are released leaving the mature 70S translation initiation complex. The protein is Translation initiation factor IF-1 of Syntrophomonas wolfei subsp. wolfei (strain DSM 2245B / Goettingen).